The primary structure comprises 122 residues: Small ribosomal subunit protein uS13 (122 aa).

Residues 95–116 (GLPCRGQKTKTNARTRKGKKKT) show a composition bias toward basic residues. A disordered region spans residues 95 to 122 (GLPCRGQKTKTNARTRKGKKKTVGAATK).

Belongs to the universal ribosomal protein uS13 family. Part of the 30S ribosomal subunit. Forms a loose heterodimer with protein S19. Forms two bridges to the 50S subunit in the 70S ribosome.

Functionally, located at the top of the head of the 30S subunit, it contacts several helices of the 16S rRNA. In the 70S ribosome it contacts the 23S rRNA (bridge B1a) and protein L5 of the 50S subunit (bridge B1b), connecting the 2 subunits; these bridges are implicated in subunit movement. Contacts the tRNAs in the A and P-sites. The protein is Small ribosomal subunit protein uS13 of Aliarcobacter butzleri (strain RM4018) (Arcobacter butzleri).